The sequence spans 330 residues: Cathepsin S (330 aa).

The signal sequence occupies residues 1 to 17; the sequence is MKQLVCVLFVCSSAVTQ. Residues 18–114 constitute a propeptide, activation peptide; it reads LHKDPTLDHH…ITYKSNPNQM (97 aa). An N-linked (GlcNAc...) asparagine glycan is attached at Asn104. Disulfide bonds link Cys126–Cys223, Cys136–Cys179, Cys170–Cys212, and Cys271–Cys319. Residue Cys139 is part of the active site. Catalysis depends on residues His277 and Asn297.

This sequence belongs to the peptidase C1 family.

The protein resides in the lysosome. It is found in the secreted. Its subcellular location is the cytoplasmic vesicle. The protein localises to the phagosome. The catalysed reaction is Similar to cathepsin L, but with much less activity on Z-Phe-Arg-|-NHMec, and more activity on the Z-Val-Val-Arg-|-Xaa compound.. Its function is as follows. Thiol protease. Key protease responsible for the removal of the invariant chain from MHC class II molecules and MHC class II antigen presentation. The bond-specificity of this proteinase is in part similar to the specificities of cathepsin L. In Saimiri boliviensis boliviensis (Bolivian squirrel monkey), this protein is Cathepsin S (CTSS).